A 248-amino-acid chain; its full sequence is tRNA uridine(34) hydroxylase (248 aa).

In terms of domain architecture, Rhodanese spans 127-221 (RGRPLVLLDT…YFEEVGGEGY (95 aa)). The active-site Cysteine persulfide intermediate is the cysteine 181.

It belongs to the TrhO family.

The enzyme catalyses uridine(34) in tRNA + AH2 + O2 = 5-hydroxyuridine(34) in tRNA + A + H2O. Functionally, catalyzes oxygen-dependent 5-hydroxyuridine (ho5U) modification at position 34 in tRNAs. In Xanthomonas axonopodis pv. citri (strain 306), this protein is tRNA uridine(34) hydroxylase.